A 112-amino-acid chain; its full sequence is Putative pterin-4-alpha-carbinolamine dehydratase (112 aa).

It belongs to the pterin-4-alpha-carbinolamine dehydratase family.

The enzyme catalyses (4aS,6R)-4a-hydroxy-L-erythro-5,6,7,8-tetrahydrobiopterin = (6R)-L-erythro-6,7-dihydrobiopterin + H2O. The sequence is that of Putative pterin-4-alpha-carbinolamine dehydratase from Shewanella putrefaciens (strain CN-32 / ATCC BAA-453).